The chain runs to 871 residues: Tegument protein UL47 homolog (871 aa).

The segment at 1 to 212 (MDQHHGARGG…DEDDMEVIRD (212 aa)) is disordered. Positions 13 to 33 (IRRPRRSIESRSHPFRATGNT) match the Nuclear localization signal motif. 2 stretches are compositionally biased toward polar residues: residues 30-41 (TGNTQRTYSTPR) and 59-81 (EQASNQDESSNPSTSNAQQSTSF). 3 stretches are compositionally biased toward acidic residues: residues 114-134 (SSSEEEEEEGPAQAPLDEEDQ), 146-155 (SSDENDEEED), and 185-207 (SESETDIDAEEEEEDDEDDEDDM).

Belongs to the alphaherpesvirinae HHV-1 UL47 family. In terms of assembly, interacts with US3 kinase. Interacts with UL31 and UL34; these interactions seem important for efficient virion nuclear egress. Interacts with UL41/VHS. Phosphorylated by US3. This phosphorylation is required for proper nuclear localization.

Its subcellular location is the virion tegument. The protein localises to the host nucleus. It is found in the host cytoplasm. Its function is as follows. Tegument protein that can bind to various RNA transcripts. Plays a role in the attenuation of selective viral and cellular mRNA degradation by modulating the activity of host shutoff RNase UL41/VHS. Also plays a role in the primary envelopment of virions in the perinuclear space, probably by interacting with two nuclear egress proteins UL31 and UL34. This chain is Tegument protein UL47 homolog, found in Equine herpesvirus 1 (strain V592) (EHV-1).